The sequence spans 507 residues: ATP synthase subunit alpha, chloroplastic (507 aa).

Gly-170 to Thr-177 lines the ATP pocket.

It belongs to the ATPase alpha/beta chains family. F-type ATPases have 2 components, CF(1) - the catalytic core - and CF(0) - the membrane proton channel. CF(1) has five subunits: alpha(3), beta(3), gamma(1), delta(1), epsilon(1). CF(0) has four main subunits: a, b, b' and c.

Its subcellular location is the plastid. The protein localises to the chloroplast thylakoid membrane. It carries out the reaction ATP + H2O + 4 H(+)(in) = ADP + phosphate + 5 H(+)(out). Produces ATP from ADP in the presence of a proton gradient across the membrane. The alpha chain is a regulatory subunit. This chain is ATP synthase subunit alpha, chloroplastic, found in Physcomitrium patens (Spreading-leaved earth moss).